Consider the following 295-residue polypeptide: Small ribosomal subunit protein uS2 (295 aa).

The interval 263-295 (KKFSKTKNIDEETNTEFEKALNDADENKNSDNA) is disordered. The segment covering 278 to 295 (EFEKALNDADENKNSDNA) has biased composition (basic and acidic residues).

This sequence belongs to the universal ribosomal protein uS2 family.

This chain is Small ribosomal subunit protein uS2, found in Rickettsia peacockii (strain Rustic).